Reading from the N-terminus, the 330-residue chain is 2-methyl-6-phytyl-1,4-hydroquinone methyltransferase 1, chloroplastic (330 aa).

The transit peptide at 1–45 (MKEMVSSSTFRAPGGLGFLGPSKIGLIPLRNRSGVRSRVKYIAPK) directs the protein to the chloroplast. Topologically, residues 46-295 (CAVSSARPAS…DVEKPVNPFT (250 aa)) are chloroplast intermembrane. Residues 107–116 (VVDVGGGTGF) are SAM motif I. Residues 152–165 (VNIIEGDAEDLPYP) are SAM motif II. The tract at residues 193-206 (RVLKLGGVACLIGP) is SAM motif III. A helical transmembrane segment spans residues 296–316 (FIFRFVMGTICASYYVLVPIY). Topologically, residues 317–330 (MWMKDQIVPKDQPI) are stromal.

The protein belongs to the class I-like SAM-binding methyltransferase superfamily. MPBQ/MBSQ MT family.

It localises to the plastid. It is found in the chloroplast inner membrane. It carries out the reaction 2-methyl-6-phytyl-1,4-benzene-1,4-diol + S-adenosyl-L-methionine = 2,3-dimethyl-6-phytylbenzene-1,4-diol + S-adenosyl-L-homocysteine + H(+). The catalysed reaction is 2-methyl-6-(all-trans-nonaprenyl)benzene-1,4-diol + S-adenosyl-L-methionine = plastoquinol-9 + S-adenosyl-L-homocysteine + H(+). The enzyme catalyses 6-geranylgeranyl-2-methylbenzene-1,4-diol + S-adenosyl-L-methionine = 6-geranylgeranyl-2,3-dimethylbenzene-1,4-diol + S-adenosyl-L-homocysteine + H(+). Its pathway is cofactor biosynthesis; tocopherol biosynthesis. In terms of biological role, involved in a key methylation step in both tocopherols (vitamin E) and plastoquinone synthesis. Catalyzes the conversion of 2-methyl-6-phytyl-1,4-hydroquinone (MPBQ) to 2,3-dimethyl-6-phytyl-1,4-hydroquinone (DMPQ, a substrate for tocopherol cyclase), and 2-methyl-6-solanyl-1,4-benzoquinone (MSBQ) to plastoquinone. The chain is 2-methyl-6-phytyl-1,4-hydroquinone methyltransferase 1, chloroplastic (ARSM2) from Oryza sativa subsp. japonica (Rice).